We begin with the raw amino-acid sequence, 430 residues long: Enolase (430 aa).

A (2R)-2-phosphoglycerate-binding site is contributed by Gln-163. The active-site Proton donor is the Glu-205. Positions 242, 285, and 312 each coordinate Mg(2+). 4 residues coordinate (2R)-2-phosphoglycerate: Lys-337, Arg-366, Ser-367, and Lys-388. Lys-337 (proton acceptor) is an active-site residue.

Belongs to the enolase family. Mg(2+) serves as cofactor.

It localises to the cytoplasm. It is found in the secreted. The protein localises to the cell surface. The catalysed reaction is (2R)-2-phosphoglycerate = phosphoenolpyruvate + H2O. Its pathway is carbohydrate degradation; glycolysis; pyruvate from D-glyceraldehyde 3-phosphate: step 4/5. In terms of biological role, catalyzes the reversible conversion of 2-phosphoglycerate (2-PG) into phosphoenolpyruvate (PEP). It is essential for the degradation of carbohydrates via glycolysis. The polypeptide is Enolase (Rubrobacter xylanophilus (strain DSM 9941 / JCM 11954 / NBRC 16129 / PRD-1)).